Here is a 63-residue protein sequence, read N- to C-terminus: Large ribosomal subunit protein uL29 (63 aa).

It belongs to the universal ribosomal protein uL29 family.

In Yersinia pseudotuberculosis serotype O:1b (strain IP 31758), this protein is Large ribosomal subunit protein uL29.